The following is a 547-amino-acid chain: Chaperonin GroEL (547 aa).

ATP contacts are provided by residues T30–P33, K51, D87–T91, G415, N479–A481, and D495.

The protein belongs to the chaperonin (HSP60) family. As to quaternary structure, forms a cylinder of 14 subunits composed of two heptameric rings stacked back-to-back. Interacts with the co-chaperonin GroES.

The protein resides in the cytoplasm. The catalysed reaction is ATP + H2O + a folded polypeptide = ADP + phosphate + an unfolded polypeptide.. In terms of biological role, together with its co-chaperonin GroES, plays an essential role in assisting protein folding. The GroEL-GroES system forms a nano-cage that allows encapsulation of the non-native substrate proteins and provides a physical environment optimized to promote and accelerate protein folding. In Nitratidesulfovibrio vulgaris (strain ATCC 29579 / DSM 644 / CCUG 34227 / NCIMB 8303 / VKM B-1760 / Hildenborough) (Desulfovibrio vulgaris), this protein is Chaperonin GroEL.